The following is a 437-amino-acid chain: Phosphoglucosamine mutase (437 aa).

The Phosphoserine intermediate role is filled by Ser93. Mg(2+) is bound by residues Ser93, Asp230, Asp232, and Asp234. Ser93 carries the post-translational modification Phosphoserine.

The protein belongs to the phosphohexose mutase family. Requires Mg(2+) as cofactor. Post-translationally, activated by phosphorylation.

The catalysed reaction is alpha-D-glucosamine 1-phosphate = D-glucosamine 6-phosphate. Functionally, catalyzes the conversion of glucosamine-6-phosphate to glucosamine-1-phosphate. The protein is Phosphoglucosamine mutase of Clavibacter michiganensis subsp. michiganensis (strain NCPPB 382).